A 146-amino-acid polypeptide reads, in one-letter code: Putative pre-16S rRNA nuclease (146 aa).

Belongs to the YqgF nuclease family.

It localises to the cytoplasm. Functionally, could be a nuclease involved in processing of the 5'-end of pre-16S rRNA. This is Putative pre-16S rRNA nuclease from Pediococcus pentosaceus (strain ATCC 25745 / CCUG 21536 / LMG 10740 / 183-1w).